The sequence spans 226 residues: Ribonuclease 3 (226 aa).

Residues 7–134 enclose the RNase III domain; that stretch reads KQNLKKKYGI…FNGALFLDQG (128 aa). E47 serves as a coordination point for Mg(2+). D51 is an active-site residue. Mg(2+) contacts are provided by D120 and E123. E123 is an active-site residue. The 67-residue stretch at 160–226 folds into the DRBM domain; the sequence is DYKTELQERL…AAQAALDKNK (67 aa). Residues 201 to 226 are disordered; sequence KVSEGQGRNKKAAEQQAAQAALDKNK. The segment covering 214 to 226 has biased composition (low complexity); the sequence is EQQAAQAALDKNK.

Belongs to the ribonuclease III family. As to quaternary structure, homodimer. Requires Mg(2+) as cofactor.

The protein resides in the cytoplasm. It carries out the reaction Endonucleolytic cleavage to 5'-phosphomonoester.. Functionally, digests double-stranded RNA. Involved in the processing of primary rRNA transcript to yield the immediate precursors to the large and small rRNAs (23S and 16S). Processes some mRNAs, and tRNAs when they are encoded in the rRNA operon. Processes pre-crRNA and tracrRNA of type II CRISPR loci if present in the organism. In Lactobacillus johnsonii (strain CNCM I-12250 / La1 / NCC 533), this protein is Ribonuclease 3.